We begin with the raw amino-acid sequence, 451 residues long: 3-phosphoshikimate 1-carboxyvinyltransferase (451 aa).

3-phosphoshikimate is bound by residues lysine 38, serine 39, and arginine 43. Residue lysine 38 participates in phosphoenolpyruvate binding. Positions 111 and 140 each coordinate phosphoenolpyruvate. Positions 185, 187, 335, and 362 each coordinate 3-phosphoshikimate. Glutamine 187 provides a ligand contact to phosphoenolpyruvate. Catalysis depends on aspartate 335, which acts as the Proton acceptor. Residues arginine 366 and arginine 408 each contribute to the phosphoenolpyruvate site.

Belongs to the EPSP synthase family. In terms of assembly, monomer.

The protein resides in the cytoplasm. The enzyme catalyses 3-phosphoshikimate + phosphoenolpyruvate = 5-O-(1-carboxyvinyl)-3-phosphoshikimate + phosphate. It participates in metabolic intermediate biosynthesis; chorismate biosynthesis; chorismate from D-erythrose 4-phosphate and phosphoenolpyruvate: step 6/7. In terms of biological role, catalyzes the transfer of the enolpyruvyl moiety of phosphoenolpyruvate (PEP) to the 5-hydroxyl of shikimate-3-phosphate (S3P) to produce enolpyruvyl shikimate-3-phosphate and inorganic phosphate. In Crocosphaera subtropica (strain ATCC 51142 / BH68) (Cyanothece sp. (strain ATCC 51142)), this protein is 3-phosphoshikimate 1-carboxyvinyltransferase.